We begin with the raw amino-acid sequence, 435 residues long: Type A flavoprotein fprA (435 aa).

Residues 48-228 are zinc metallo-hydrolase; sequence ANGTTYNAYA…PFRSFVAQAL (181 aa). The Fe cation site is built by histidine 98, glutamate 100, aspartate 102, histidine 167, aspartate 186, and histidine 243. The Flavodoxin-like domain maps to 276–415; that stretch reads LLIFYVSAYG…EGRAFGRRLA (140 aa).

The protein in the N-terminal section; belongs to the zinc metallo-hydrolase group 3 family. In terms of assembly, homodimer. FMN serves as cofactor. Requires Fe cation as cofactor.

In terms of biological role, low-potential electron donor to a number of redox enzymes. The sequence is that of Type A flavoprotein fprA (fprA) from Rhodobacter capsulatus (strain ATCC BAA-309 / NBRC 16581 / SB1003).